The chain runs to 302 residues: 4-diphosphocytidyl-2-C-methyl-D-erythritol kinase (302 aa).

Lys-11 is a catalytic residue. 93–103 (PVASGLAGGST) contacts ATP. The active site involves Asp-135.

The protein belongs to the GHMP kinase family. IspE subfamily.

The catalysed reaction is 4-CDP-2-C-methyl-D-erythritol + ATP = 4-CDP-2-C-methyl-D-erythritol 2-phosphate + ADP + H(+). It functions in the pathway isoprenoid biosynthesis; isopentenyl diphosphate biosynthesis via DXP pathway; isopentenyl diphosphate from 1-deoxy-D-xylulose 5-phosphate: step 3/6. Catalyzes the phosphorylation of the position 2 hydroxy group of 4-diphosphocytidyl-2C-methyl-D-erythritol. The chain is 4-diphosphocytidyl-2-C-methyl-D-erythritol kinase from Gloeobacter violaceus (strain ATCC 29082 / PCC 7421).